Consider the following 72-residue polypeptide: Large ribosomal subunit protein uL29 (72 aa).

It belongs to the universal ribosomal protein uL29 family.

This is Large ribosomal subunit protein uL29 from Caldicellulosiruptor saccharolyticus (strain ATCC 43494 / DSM 8903 / Tp8T 6331).